The following is a 793-amino-acid chain: MNDFSFEDKGLISRSGFGSRHVRRVVKALALIFSLLILYLTISNVSDSPPKRDSLSLDDIVLQKYKPSYKQVNWIDSQGLKDTFLVKYGDLINIQDPYNLNKTLFSVSDLVYNGIQLDYDSYSISFDAKYVLVSVNKSQRWRHSSFAQYYLYNTETKDVNMLGQDNEHWTISLAEWSPTGHQLSFVYNNDLYVRKNDGNVQRLTYDGTVDVFNGLTDWIYEEEVLSSPSTIWWSPDSDKIAFLKLNESEIPTYHYPLYTAELDPSLPEFDYNKDMAIKYPKPGNPNPSVSLFVADLNSNASSNFSLWHNEPLAEPVVQNVLWVNTSSVLVQFTNRNSTCITARLLDTELKSIHTVKTECLEEGWYEVQQSAKMFPLNNSLVWENWSDGYFDILALDDYNHLAFIPFNGSSPIYLTSGAWDVTDGPIHIDGDFGNVYFLATLKDSTERHLYYVSLDTLEIYGITDNGEDEGYYSTSFSPFGDFYVLNYHGPDVPWQELRSTKDKDYCLSLETNSRLKQQLSSITLPSVEYGKLTFNDTTFNFMERRPRNFDVNKKYPVLFFAYGGPGSQQVAKLFRVDFQAYLASHPDFEFIVVTLDGRGTGFNGNAFRYSVSRHLGEWESYDQGQAGKFWADLPFVDENHVGIWGWSYGGYLTLKTLETQDVFSYGMAVAPVTDWRLYDSVYTERYMDLPQYNKEGYKNSQIHDYEKFKQLKRFFVAHGTGDDNVHFQHSMHLMDGLNLANCYNYDMAVFPDSAHSISYHNASLSIYHRLSEWIGDALGRIDPSTGVRQHRWD.

Topologically, residues 1-24 (MNDFSFEDKGLISRSGFGSRHVRR) are cytoplasmic. The chain crosses the membrane as a helical; Signal-anchor for type II membrane protein span at residues 25–45 (VVKALALIFSLLILYLTISNV). Over 46–793 (SDSPPKRDSL…STGVRQHRWD (748 aa)) the chain is Lumenal. N101, N136, N246, N299, N303, N324, N336, N377, N384, N407, and N535 each carry an N-linked (GlcNAc...) asparagine glycan. Residues S647, D722, and H755 each act as charge relay system in the active site. N761 is a glycosylation site (N-linked (GlcNAc...) asparagine).

The protein belongs to the peptidase S9B family.

Its subcellular location is the vacuole membrane. This is Putative dipeptidyl aminopeptidase C2E11.08 from Schizosaccharomyces pombe (strain 972 / ATCC 24843) (Fission yeast).